The primary structure comprises 345 residues: Large ribosomal subunit protein uL10 (345 aa).

Positions 303–345 (SLPQTAAPQQTPQPTEAPKEEAQEEKKEGPSEEEIAGSLASLF) are disordered. Residues 305 to 318 (PQTAAPQQTPQPTE) are compositionally biased toward low complexity. Over residues 319 to 332 (APKEEAQEEKKEGP) the composition is skewed to basic and acidic residues.

This sequence belongs to the universal ribosomal protein uL10 family. In terms of assembly, part of the 50S ribosomal subunit. Forms part of the ribosomal stalk which helps the ribosome interact with GTP-bound translation factors. Forms a heptameric L10(L12)2(L12)2(L12)2 complex, where L10 forms an elongated spine to which the L12 dimers bind in a sequential fashion.

Its function is as follows. Forms part of the ribosomal stalk, playing a central role in the interaction of the ribosome with GTP-bound translation factors. This is Large ribosomal subunit protein uL10 from Pyrobaculum aerophilum (strain ATCC 51768 / DSM 7523 / JCM 9630 / CIP 104966 / NBRC 100827 / IM2).